A 333-amino-acid chain; its full sequence is Meiotic drive suppressor wtf9 (333 aa).

The tract at residues 1 to 69 (MKNNYTSLKS…ENHSSGTTDN (69 aa)) is disordered. The span at 19–30 (KTDHEIDLEKGP) shows a compositional bias: basic and acidic residues. 4 helical membrane passes run 73 to 95 (LLIKLLISFTSIILFNAPAVCYL), 108 to 130 (VEWTLFGFWCFVCTLALIFLTYF), 174 to 191 (WVVIIWLLWVVICYTLFL), and 204 to 226 (LICSTCSISAALLLFLLYVRLPF).

The protein belongs to the WTF family. In terms of assembly, homomer. Interacts with other proteins that exhibit high sequence similarity.

The protein resides in the spore membrane. The protein localises to the vacuole membrane. In terms of biological role, acts as a suppressor component of the dual wtf meiotic drive system, and can suppress but not confer meiotic drive by compatible poisons. Wtf meiotic drive systems promote unequal transmission of alleles from the parental zygote to progeny spores by encoding a poison and an antidote from the same locus; the poison is trans-acting and forms toxic aggregates in all spores within an ascus, wherease the antidote is spore-specific and targets aggregates for degradation by the vacuole. Meiotic drive by wtf systems therefore lead to poisoning of all progeny that do not inherit the dual poison/antidote allele, or express a compatible antidote. This Schizosaccharomyces pombe (strain 972 / ATCC 24843) (Fission yeast) protein is Meiotic drive suppressor wtf9.